Reading from the N-terminus, the 219-residue chain is 3-dehydroquinate dehydratase (219 aa).

3-dehydroquinate-binding positions include 34–36 (ELR) and arginine 63. Catalysis depends on histidine 114, which acts as the Proton donor/acceptor. The active-site Schiff-base intermediate with substrate is lysine 139. 3-dehydroquinate is bound by residues arginine 174, threonine 193, and glutamine 197.

Belongs to the type-I 3-dehydroquinase family. Homodimer.

The enzyme catalyses 3-dehydroquinate = 3-dehydroshikimate + H2O. It participates in metabolic intermediate biosynthesis; chorismate biosynthesis; chorismate from D-erythrose 4-phosphate and phosphoenolpyruvate: step 3/7. Involved in the third step of the chorismate pathway, which leads to the biosynthesis of aromatic amino acids. Catalyzes the cis-dehydration of 3-dehydroquinate (DHQ) and introduces the first double bond of the aromatic ring to yield 3-dehydroshikimate. The polypeptide is 3-dehydroquinate dehydratase (Sulfolobus acidocaldarius (strain ATCC 33909 / DSM 639 / JCM 8929 / NBRC 15157 / NCIMB 11770)).